A 485-amino-acid polypeptide reads, in one-letter code: MAAVWQQVLAVDARYNAYRTPTFPQFRTQYIRRRSQLLRENAKAGHPPALRRQYLRLRGQLLGQRYGPLSEPGSARAYSNSIVRSSRTTLDRMEDFEDDPRALGARGHRRSVSRGSYQLQAQMNRAVYEDRPPGSVVPTSAAEASRAMAGDTSLSENYAFAGMYHVFDQHVDEAVPRVRFANDDRHRLACCSLDGSISLCQLVPAPPTVLRVLRGHTRGVSDFAWSLSNDILVSTSLDATMRIWASEDGRCIREIPDPDGAELLCCTFQPVNNNLTVVGNAKHNVHVMNISTGKKVKGGSSKLTGRVLALSFDAPGRLLWAGDDRGSVFSFLFDMATGKLTKAKRLVVHEGSPVTSISARSWVSREARDPSLLINACLNKLLLYRVVDNEGTLQLKRSFPIEQSSHPVRSIFCPLMSFRQGACVVTGSEDMCVHFFDVERAAKAAVNKLQGHSAPVLDVSFNCDESLLASSDASGMVIVWRREQK.

3 positions are modified to phosphoserine: S70, S74, and S79. Asymmetric dimethylarginine; alternate is present on R114. Position 114 is an omega-N-methylarginine; alternate (R114). 5 WD repeats span residues 170 to 210 (HVDE…PTVL), 215 to 254 (GHTR…CIRE), 302 to 341 (KLTG…GKLT), 406 to 446 (HPVR…KAAV), and 451 to 484 (GHSA…RREQ).

It is found in the nucleus. This is WD repeat-containing protein 13 (WDR13) from Pongo abelii (Sumatran orangutan).